Here is a 343-residue protein sequence, read N- to C-terminus: Heme A synthase (343 aa).

The next 8 membrane-spanning stretches (helical) occupy residues 13 to 33 (VAIW…VGGA), 96 to 116 (HRLL…VFLI), 130 to 150 (AMLG…SSGL), 161 to 181 (LMTH…TALD), 197 to 217 (GWAL…ALVA), 258 to 278 (FNHR…VVLA), 294 to 314 (AVAA…MAAV), and 318 to 338 (LGVL…AFAW). His-260 contributes to the heme binding site. Position 322 (His-322) interacts with heme.

The protein belongs to the COX15/CtaA family. Type 2 subfamily. As to quaternary structure, interacts with CtaB. It depends on heme b as a cofactor.

It is found in the cell membrane. The enzyme catalyses Fe(II)-heme o + 2 A + H2O = Fe(II)-heme a + 2 AH2. Its pathway is porphyrin-containing compound metabolism; heme A biosynthesis; heme A from heme O: step 1/1. In terms of biological role, catalyzes the conversion of heme O to heme A by two successive hydroxylations of the methyl group at C8. The first hydroxylation forms heme I, the second hydroxylation results in an unstable dihydroxymethyl group, which spontaneously dehydrates, resulting in the formyl group of heme A. This Caulobacter vibrioides (strain ATCC 19089 / CIP 103742 / CB 15) (Caulobacter crescentus) protein is Heme A synthase.